We begin with the raw amino-acid sequence, 80 residues long: Large ribosomal subunit protein eL13 (80 aa).

The protein belongs to the eukaryotic ribosomal protein eL13 family.

The chain is Large ribosomal subunit protein eL13 from Aeropyrum pernix (strain ATCC 700893 / DSM 11879 / JCM 9820 / NBRC 100138 / K1).